We begin with the raw amino-acid sequence, 285 residues long: Bifunctional protein FolD (285 aa).

Residues 166–168, Ser-191, and Ile-232 contribute to the NADP(+) site; that span reads GRS.

The protein belongs to the tetrahydrofolate dehydrogenase/cyclohydrolase family. Homodimer.

The enzyme catalyses (6R)-5,10-methylene-5,6,7,8-tetrahydrofolate + NADP(+) = (6R)-5,10-methenyltetrahydrofolate + NADPH. It carries out the reaction (6R)-5,10-methenyltetrahydrofolate + H2O = (6R)-10-formyltetrahydrofolate + H(+). Its pathway is one-carbon metabolism; tetrahydrofolate interconversion. Catalyzes the oxidation of 5,10-methylenetetrahydrofolate to 5,10-methenyltetrahydrofolate and then the hydrolysis of 5,10-methenyltetrahydrofolate to 10-formyltetrahydrofolate. This Rickettsia typhi (strain ATCC VR-144 / Wilmington) protein is Bifunctional protein FolD.